We begin with the raw amino-acid sequence, 200 residues long: Protein C2-DOMAIN ABA-RELATED 5 (200 aa).

A C2 domain is found at V22 to S142. Ca(2+)-binding residues include R57, D58, D63, D109, Y110, D111, and D117.

Belongs to the plant CAR protein family. In terms of assembly, binds to PYR/PYL/RCAR abscisic acid intracellular receptors in an ABA-independent manner, both at the plasma membrane and in the nucleus.

Its subcellular location is the cell membrane. It localises to the nucleus. In terms of biological role, stimulates the GTPase/ATPase activities of Obg-like ATPases. Mediates the transient calcium-dependent interaction of PYR/PYL/RCAR abscisic acid (ABA) receptors with the plasma membrane and thus regulates ABA sensitivity. The sequence is that of Protein C2-DOMAIN ABA-RELATED 5 from Arabidopsis thaliana (Mouse-ear cress).